Reading from the N-terminus, the 163-residue chain is Disulfide bond formation protein B 1 (163 aa).

Over 1–9 the chain is Cytoplasmic; sequence MPLASPRQL. The helical transmembrane segment at 10–26 threads the bilayer; that stretch reads FLLAFLACVAIMGGALY. The Periplasmic portion of the chain corresponds to 27 to 44; sequence LEHVVGLEACPLCVVQRI. Residues Cys-36 and Cys-39 are joined by a disulfide bond. Residues 45 to 61 traverse the membrane as a helical segment; that stretch reads FFILIGLTCLAGAIQGP. Residues 62-67 are Cytoplasmic-facing; it reads GLRGRR. A helical transmembrane segment spans residues 68-85; it reads IYSVLVFLLALGGGATAA. At 86 to 142 the chain is on the periplasmic side; the sequence is RQVWLQTVPLDQLPACLPSLDYMMQALPFQEVIRLVLHGTADCAQVSWTLFTLSIPE. Cys-101 and Cys-128 are joined by a disulfide. The chain crosses the membrane as a helical span at residues 143–161; the sequence is WSLLAFVAYLGFSIVQFLR. Topologically, residues 162–163 are cytoplasmic; that stretch reads RA.

Belongs to the DsbB family.

The protein localises to the cell inner membrane. In terms of biological role, required for disulfide bond formation in some periplasmic proteins. Acts by oxidizing the DsbA protein. This chain is Disulfide bond formation protein B 1 (dsbB1), found in Pseudomonas aeruginosa (strain ATCC 15692 / DSM 22644 / CIP 104116 / JCM 14847 / LMG 12228 / 1C / PRS 101 / PAO1).